The primary structure comprises 97 residues: Aspartyl/glutamyl-tRNA(Asn/Gln) amidotransferase subunit C (97 aa).

Belongs to the GatC family. As to quaternary structure, heterotrimer of A, B and C subunits.

It carries out the reaction L-glutamyl-tRNA(Gln) + L-glutamine + ATP + H2O = L-glutaminyl-tRNA(Gln) + L-glutamate + ADP + phosphate + H(+). It catalyses the reaction L-aspartyl-tRNA(Asn) + L-glutamine + ATP + H2O = L-asparaginyl-tRNA(Asn) + L-glutamate + ADP + phosphate + 2 H(+). Its function is as follows. Allows the formation of correctly charged Asn-tRNA(Asn) or Gln-tRNA(Gln) through the transamidation of misacylated Asp-tRNA(Asn) or Glu-tRNA(Gln) in organisms which lack either or both of asparaginyl-tRNA or glutaminyl-tRNA synthetases. The reaction takes place in the presence of glutamine and ATP through an activated phospho-Asp-tRNA(Asn) or phospho-Glu-tRNA(Gln). The polypeptide is Aspartyl/glutamyl-tRNA(Asn/Gln) amidotransferase subunit C (Prochlorococcus marinus (strain MIT 9301)).